The following is a 650-amino-acid chain: Acetyl-coenzyme A synthetase (650 aa).

CoA is bound by residues 191-194 (RGGR), Thr311, and Asn335. Residues 387-389 (GEP), 411-416 (DTWWQT), Asp500, and Arg515 each bind ATP. Position 523 (Ser523) interacts with CoA. Arg526 is an ATP binding site. Val537, His539, and Val542 together coordinate Mg(2+). Position 584 (Arg584) interacts with CoA. Position 609 is an N6-acetyllysine (Lys609).

It belongs to the ATP-dependent AMP-binding enzyme family. Mg(2+) is required as a cofactor. In terms of processing, acetylated. Deacetylation by the SIR2-homolog deacetylase activates the enzyme.

It carries out the reaction acetate + ATP + CoA = acetyl-CoA + AMP + diphosphate. In terms of biological role, catalyzes the conversion of acetate into acetyl-CoA (AcCoA), an essential intermediate at the junction of anabolic and catabolic pathways. AcsA undergoes a two-step reaction. In the first half reaction, AcsA combines acetate with ATP to form acetyl-adenylate (AcAMP) intermediate. In the second half reaction, it can then transfer the acetyl group from AcAMP to the sulfhydryl group of CoA, forming the product AcCoA. In Shewanella sp. (strain W3-18-1), this protein is Acetyl-coenzyme A synthetase.